The following is a 299-amino-acid chain: 4-hydroxy-3-methylbut-2-enyl diphosphate reductase (299 aa).

Cysteine 12 is a [4Fe-4S] cluster binding site. Positions 42 and 88 each coordinate (2E)-4-hydroxy-3-methylbut-2-enyl diphosphate. Histidine 42 and histidine 88 together coordinate dimethylallyl diphosphate. Positions 42 and 88 each coordinate isopentenyl diphosphate. A [4Fe-4S] cluster-binding site is contributed by cysteine 110. Histidine 138 contacts (2E)-4-hydroxy-3-methylbut-2-enyl diphosphate. Histidine 138 contacts dimethylallyl diphosphate. Histidine 138 provides a ligand contact to isopentenyl diphosphate. Glutamate 140 functions as the Proton donor in the catalytic mechanism. (2E)-4-hydroxy-3-methylbut-2-enyl diphosphate is bound at residue threonine 177. A [4Fe-4S] cluster-binding site is contributed by cysteine 205. (2E)-4-hydroxy-3-methylbut-2-enyl diphosphate contacts are provided by serine 233, asparagine 235, and serine 277. Dimethylallyl diphosphate-binding residues include serine 233, asparagine 235, and serine 277. Isopentenyl diphosphate contacts are provided by serine 233, asparagine 235, and serine 277.

This sequence belongs to the IspH family. The cofactor is [4Fe-4S] cluster.

The enzyme catalyses isopentenyl diphosphate + 2 oxidized [2Fe-2S]-[ferredoxin] + H2O = (2E)-4-hydroxy-3-methylbut-2-enyl diphosphate + 2 reduced [2Fe-2S]-[ferredoxin] + 2 H(+). It carries out the reaction dimethylallyl diphosphate + 2 oxidized [2Fe-2S]-[ferredoxin] + H2O = (2E)-4-hydroxy-3-methylbut-2-enyl diphosphate + 2 reduced [2Fe-2S]-[ferredoxin] + 2 H(+). Its pathway is isoprenoid biosynthesis; dimethylallyl diphosphate biosynthesis; dimethylallyl diphosphate from (2E)-4-hydroxy-3-methylbutenyl diphosphate: step 1/1. It participates in isoprenoid biosynthesis; isopentenyl diphosphate biosynthesis via DXP pathway; isopentenyl diphosphate from 1-deoxy-D-xylulose 5-phosphate: step 6/6. Its function is as follows. Catalyzes the conversion of 1-hydroxy-2-methyl-2-(E)-butenyl 4-diphosphate (HMBPP) into a mixture of isopentenyl diphosphate (IPP) and dimethylallyl diphosphate (DMAPP). Acts in the terminal step of the DOXP/MEP pathway for isoprenoid precursor biosynthesis. In Malacoplasma penetrans (strain HF-2) (Mycoplasma penetrans), this protein is 4-hydroxy-3-methylbut-2-enyl diphosphate reductase.